Consider the following 69-residue polypeptide: Large ribosomal subunit protein uL29 (69 aa).

This sequence belongs to the universal ribosomal protein uL29 family.

This Lactococcus lactis subsp. lactis (strain IL1403) (Streptococcus lactis) protein is Large ribosomal subunit protein uL29 (rpmC).